A 355-amino-acid polypeptide reads, in one-letter code: Phosphate acyltransferase (355 aa).

Belongs to the PlsX family. As to quaternary structure, homodimer. Probably interacts with PlsY.

The protein resides in the cytoplasm. The enzyme catalyses a fatty acyl-[ACP] + phosphate = an acyl phosphate + holo-[ACP]. The protein operates within lipid metabolism; phospholipid metabolism. Its function is as follows. Catalyzes the reversible formation of acyl-phosphate (acyl-PO(4)) from acyl-[acyl-carrier-protein] (acyl-ACP). This enzyme utilizes acyl-ACP as fatty acyl donor, but not acyl-CoA. This chain is Phosphate acyltransferase, found in Azorhizobium caulinodans (strain ATCC 43989 / DSM 5975 / JCM 20966 / LMG 6465 / NBRC 14845 / NCIMB 13405 / ORS 571).